A 640-amino-acid chain; its full sequence is Chaperone protein DnaK (640 aa).

The residue at position 198 (Thr-198) is a Phosphothreonine; by autocatalysis. Positions 600–640 (KTQGAGAEGGEQPHGEQEAGGAAKGEKVVDADFEEVKDDKK) are disordered. Residues 630–640 (ADFEEVKDDKK) show a composition bias toward acidic residues.

This sequence belongs to the heat shock protein 70 family.

Acts as a chaperone. The protein is Chaperone protein DnaK of Citrifermentans bemidjiense (strain ATCC BAA-1014 / DSM 16622 / JCM 12645 / Bem) (Geobacter bemidjiensis).